The sequence spans 290 residues: 33 kDa chaperonin (290 aa).

2 cysteine pairs are disulfide-bonded: cysteine 235–cysteine 237 and cysteine 268–cysteine 271.

The protein belongs to the HSP33 family. Under oxidizing conditions two disulfide bonds are formed involving the reactive cysteines. Under reducing conditions zinc is bound to the reactive cysteines and the protein is inactive.

It localises to the cytoplasm. Redox regulated molecular chaperone. Protects both thermally unfolding and oxidatively damaged proteins from irreversible aggregation. Plays an important role in the bacterial defense system toward oxidative stress. The chain is 33 kDa chaperonin from Streptococcus equi subsp. equi (strain 4047).